A 421-amino-acid polypeptide reads, in one-letter code: Gamma-glutamyl phosphate reductase (421 aa).

It belongs to the gamma-glutamyl phosphate reductase family.

The protein localises to the cytoplasm. It catalyses the reaction L-glutamate 5-semialdehyde + phosphate + NADP(+) = L-glutamyl 5-phosphate + NADPH + H(+). The protein operates within amino-acid biosynthesis; L-proline biosynthesis; L-glutamate 5-semialdehyde from L-glutamate: step 2/2. In terms of biological role, catalyzes the NADPH-dependent reduction of L-glutamate 5-phosphate into L-glutamate 5-semialdehyde and phosphate. The product spontaneously undergoes cyclization to form 1-pyrroline-5-carboxylate. The chain is Gamma-glutamyl phosphate reductase from Acinetobacter baumannii (strain AYE).